A 581-amino-acid polypeptide reads, in one-letter code: Protein SPT2 homolog (581 aa).

Residues 26 to 35 (YYSTKYSPPK) are compositionally biased toward low complexity. Disordered regions lie at residues 26 to 50 (YYST…NIQK) and 145 to 495 (QEDK…EYDS). The stretch at 36–76 (KQSKESKQLSSNIQKFLQKKEAEEAEKKRLERQKLNDLLAK) forms a coiled coil. Positions 162-181 (SGTKERVKAAITREREEAKG) are enriched in basic and acidic residues. Composition is skewed to polar residues over residues 182–197 (NTRQ…SSAT) and 204–213 (VARSYSTSKT). Composition is skewed to basic and acidic residues over residues 218-236 (NAEK…EQRR) and 256-312 (LAEK…KETP). Residues 276-307 (ERLLSAREKRELEERQRQQEQRAQRLKMRESE) adopt a coiled-coil conformation. A compositionally biased stretch (low complexity) spans 352–376 (SSASSTSLSSSNSHSSASRSSVSSS). Polar residues predominate over residues 447–461 (TRQTPSSDVQRSQGG). The span at 486–495 (DDDDEDEYDS) shows a compositional bias: acidic residues.

It belongs to the SPT2 family.

This is Protein SPT2 homolog from Drosophila melanogaster (Fruit fly).